The chain runs to 266 residues: MAVGKNKRLTKGGKKGAKKKIVDPFSKKDWYDVKAPAMFNIRNLGKTLVTRTQGTRIASDGLKGRVYEVSLADLQNDEVAFRKFKLITEDVQGKNCLTNFHGMDLTRDKMCSMVKKWQTMIEAHVDVKTTDGYLLRLFCVGFTKRRNNQIRKTSYAQHQQVRQIRKKMMEIMTREVQTNDLKEVVNKLIPDSIGKDIEKACQSIYPLHDVYVRKVKMLKKPKFELGKLMELHGEGGAGTAAKATGDDTGAKVERADGYEPPIQESV.

The interval 236-266 (GAGTAAKATGDDTGAKVERADGYEPPIQESV) is disordered. The segment covering 244–257 (TGDDTGAKVERADG) has biased composition (basic and acidic residues).

This sequence belongs to the eukaryotic ribosomal protein eS1 family. As to quaternary structure, component of the small ribosomal subunit. Mature ribosomes consist of a small (40S) and a large (60S) subunit. The 40S subunit contains about 33 different proteins and 1 molecule of RNA (18S). The 60S subunit contains about 49 different proteins and 3 molecules of RNA (28S, 5.8S and 5S). Part of the small subunit (SSU) processome, composed of more than 70 proteins and the RNA chaperone small nucleolar RNA (snoRNA) U3.

It is found in the cytoplasm. The protein localises to the nucleus. It localises to the nucleolus. In terms of biological role, component of the small ribosomal subunit. The ribosome is a large ribonucleoprotein complex responsible for the synthesis of proteins in the cell. Part of the small subunit (SSU) processome, first precursor of the small eukaryotic ribosomal subunit. During the assembly of the SSU processome in the nucleolus, many ribosome biogenesis factors, an RNA chaperone and ribosomal proteins associate with the nascent pre-rRNA and work in concert to generate RNA folding, modifications, rearrangements and cleavage as well as targeted degradation of pre-ribosomal RNA by the RNA exosome. May play a role during erythropoiesis. This chain is Small ribosomal subunit protein eS1 (rps3a), found in Tetraodon nigroviridis (Spotted green pufferfish).